A 200-amino-acid chain; its full sequence is NADH-quinone oxidoreductase subunit C (200 aa).

This sequence belongs to the complex I 30 kDa subunit family. As to quaternary structure, NDH-1 is composed of 14 different subunits. Subunits NuoB, C, D, E, F, and G constitute the peripheral sector of the complex.

The protein localises to the cell inner membrane. The catalysed reaction is a quinone + NADH + 5 H(+)(in) = a quinol + NAD(+) + 4 H(+)(out). Functionally, NDH-1 shuttles electrons from NADH, via FMN and iron-sulfur (Fe-S) centers, to quinones in the respiratory chain. The immediate electron acceptor for the enzyme in this species is believed to be ubiquinone. Couples the redox reaction to proton translocation (for every two electrons transferred, four hydrogen ions are translocated across the cytoplasmic membrane), and thus conserves the redox energy in a proton gradient. This chain is NADH-quinone oxidoreductase subunit C, found in Cereibacter sphaeroides (strain ATCC 17029 / ATH 2.4.9) (Rhodobacter sphaeroides).